The sequence spans 241 residues: Orotidine 5'-phosphate decarboxylase (241 aa).

Residues aspartate 18, lysine 39, 66-75 (DLKFHDIPAT), threonine 130, arginine 192, glutamine 201, glycine 221, and arginine 222 each bind substrate. Lysine 68 functions as the Proton donor in the catalytic mechanism.

This sequence belongs to the OMP decarboxylase family. Type 1 subfamily. In terms of assembly, homodimer.

It carries out the reaction orotidine 5'-phosphate + H(+) = UMP + CO2. It functions in the pathway pyrimidine metabolism; UMP biosynthesis via de novo pathway; UMP from orotate: step 2/2. Functionally, catalyzes the decarboxylation of orotidine 5'-monophosphate (OMP) to uridine 5'-monophosphate (UMP). This is Orotidine 5'-phosphate decarboxylase from Synechococcus sp. (strain CC9605).